Consider the following 274-residue polypeptide: Diaminopimelate epimerase (274 aa).

The substrate site is built by N11, Q44, and N64. The active-site Proton donor is the C73. Substrate-binding positions include 74-75 (GN), N157, N190, and 208-209 (ER). C217 serves as the catalytic Proton acceptor. 218–219 (GS) lines the substrate pocket.

Belongs to the diaminopimelate epimerase family. In terms of assembly, homodimer.

Its subcellular location is the cytoplasm. The catalysed reaction is (2S,6S)-2,6-diaminopimelate = meso-2,6-diaminopimelate. The protein operates within amino-acid biosynthesis; L-lysine biosynthesis via DAP pathway; DL-2,6-diaminopimelate from LL-2,6-diaminopimelate: step 1/1. Its function is as follows. Catalyzes the stereoinversion of LL-2,6-diaminopimelate (L,L-DAP) to meso-diaminopimelate (meso-DAP), a precursor of L-lysine and an essential component of the bacterial peptidoglycan. The chain is Diaminopimelate epimerase from Pectobacterium atrosepticum (strain SCRI 1043 / ATCC BAA-672) (Erwinia carotovora subsp. atroseptica).